Consider the following 161-residue polypeptide: Phosphopantetheine adenylyltransferase (161 aa).

S11 is a binding site for substrate. ATP contacts are provided by residues 11–12 (SF) and H19. Substrate-binding residues include K43, L75, and R89. Residues 90 to 92 (GLR), E100, and 125 to 131 (YSFISSS) contribute to the ATP site.

The protein belongs to the bacterial CoaD family. Homohexamer. It depends on Mg(2+) as a cofactor.

It is found in the cytoplasm. The enzyme catalyses (R)-4'-phosphopantetheine + ATP + H(+) = 3'-dephospho-CoA + diphosphate. Its pathway is cofactor biosynthesis; coenzyme A biosynthesis; CoA from (R)-pantothenate: step 4/5. Functionally, reversibly transfers an adenylyl group from ATP to 4'-phosphopantetheine, yielding dephospho-CoA (dPCoA) and pyrophosphate. This is Phosphopantetheine adenylyltransferase from Staphylococcus carnosus (strain TM300).